The sequence spans 201 residues: Holliday junction branch migration complex subunit RuvA (201 aa).

Positions 1–63 are domain I; that stretch reads MISHFSGTVS…EESLTLYGFV (63 aa). Residues 64 to 142 form a domain II region; sequence EADDRDAFEL…ALAPRGASAS (79 aa). The flexible linker stretch occupies residues 143–153; the sequence is GATHVAAPWRE. The segment at 153–201 is domain III; sequence EQVAEGLVGLGWSTKDAEKAVDKVVALKEADPAMSIGNLMRAALRSLAR.

Belongs to the RuvA family. As to quaternary structure, homotetramer. Forms an RuvA(8)-RuvB(12)-Holliday junction (HJ) complex. HJ DNA is sandwiched between 2 RuvA tetramers; dsDNA enters through RuvA and exits via RuvB. An RuvB hexamer assembles on each DNA strand where it exits the tetramer. Each RuvB hexamer is contacted by two RuvA subunits (via domain III) on 2 adjacent RuvB subunits; this complex drives branch migration. In the full resolvosome a probable DNA-RuvA(4)-RuvB(12)-RuvC(2) complex forms which resolves the HJ.

Its subcellular location is the cytoplasm. In terms of biological role, the RuvA-RuvB-RuvC complex processes Holliday junction (HJ) DNA during genetic recombination and DNA repair, while the RuvA-RuvB complex plays an important role in the rescue of blocked DNA replication forks via replication fork reversal (RFR). RuvA specifically binds to HJ cruciform DNA, conferring on it an open structure. The RuvB hexamer acts as an ATP-dependent pump, pulling dsDNA into and through the RuvAB complex. HJ branch migration allows RuvC to scan DNA until it finds its consensus sequence, where it cleaves and resolves the cruciform DNA. This chain is Holliday junction branch migration complex subunit RuvA, found in Cutibacterium acnes (strain DSM 16379 / KPA171202) (Propionibacterium acnes).